A 226-amino-acid chain; its full sequence is UPF0502 protein azo0627 (226 aa).

Belongs to the UPF0502 family.

The protein is UPF0502 protein azo0627 of Azoarcus sp. (strain BH72).